Reading from the N-terminus, the 443-residue chain is Methyl-coenzyme M reductase I subunit beta (443 aa).

Residue Y367 coordinates coenzyme M. Position 369 (G369) interacts with coenzyme B.

Belongs to the methyl-coenzyme M reductase beta subunit family. MCR is a hexamer of two alpha, two beta, and two gamma chains, forming a dimer of heterotrimers. The cofactor is coenzyme F430.

The protein localises to the cytoplasm. The enzyme catalyses coenzyme B + methyl-coenzyme M = methane + coenzyme M-coenzyme B heterodisulfide. It participates in one-carbon metabolism; methyl-coenzyme M reduction; methane from methyl-coenzyme M: step 1/1. Functionally, component of the methyl-coenzyme M reductase (MCR) I that catalyzes the reductive cleavage of methyl-coenzyme M (CoM-S-CH3 or 2-(methylthio)ethanesulfonate) using coenzyme B (CoB or 7-mercaptoheptanoylthreonine phosphate) as reductant which results in the production of methane and the mixed heterodisulfide of CoB and CoM (CoM-S-S-CoB). This is the final step in methanogenesis. The sequence is that of Methyl-coenzyme M reductase I subunit beta (mcrB) from Methanothermobacter thermautotrophicus (strain ATCC 29096 / DSM 1053 / JCM 10044 / NBRC 100330 / Delta H) (Methanobacterium thermoautotrophicum).